The chain runs to 340 residues: Glycerol-3-phosphate dehydrogenase [NAD(P)+] (340 aa).

4 residues coordinate NADPH: S11, W12, R33, and K106. Sn-glycerol 3-phosphate-binding residues include K106, G137, and S139. A141 is a binding site for NADPH. Sn-glycerol 3-phosphate-binding residues include K192, D245, S255, R256, and N257. The Proton acceptor role is filled by K192. NADPH is bound at residue R256. Residues V280 and E282 each coordinate NADPH.

This sequence belongs to the NAD-dependent glycerol-3-phosphate dehydrogenase family.

The protein localises to the cytoplasm. It catalyses the reaction sn-glycerol 3-phosphate + NAD(+) = dihydroxyacetone phosphate + NADH + H(+). The enzyme catalyses sn-glycerol 3-phosphate + NADP(+) = dihydroxyacetone phosphate + NADPH + H(+). It functions in the pathway membrane lipid metabolism; glycerophospholipid metabolism. In terms of biological role, catalyzes the reduction of the glycolytic intermediate dihydroxyacetone phosphate (DHAP) to sn-glycerol 3-phosphate (G3P), the key precursor for phospholipid synthesis. The chain is Glycerol-3-phosphate dehydrogenase [NAD(P)+] from Bacillus anthracis (strain A0248).